Here is a 549-residue protein sequence, read N- to C-terminus: Chaperonin GroEL (549 aa).

ATP contacts are provided by residues 29 to 32 (TAGP), lysine 50, 86 to 90 (DGTTT), glycine 417, and aspartate 499.

This sequence belongs to the chaperonin (HSP60) family. In terms of assembly, forms a cylinder of 14 subunits composed of two heptameric rings stacked back-to-back. Interacts with the co-chaperonin GroES.

It localises to the cytoplasm. It carries out the reaction ATP + H2O + a folded polypeptide = ADP + phosphate + an unfolded polypeptide.. Its function is as follows. Together with its co-chaperonin GroES, plays an essential role in assisting protein folding. The GroEL-GroES system forms a nano-cage that allows encapsulation of the non-native substrate proteins and provides a physical environment optimized to promote and accelerate protein folding. The sequence is that of Chaperonin GroEL from Anaplasma marginale (strain Florida).